The following is a 336-amino-acid chain: Large ribosomal subunit protein uL1m (336 aa).

Residues 1-50 (MAAAVRCLRRVLIHHQRHCLCKMASQASLYPCSVNSLLHNRHFAAAAAAA) constitute a mitochondrion transit peptide. Serine 85 is subject to Phosphoserine.

This sequence belongs to the universal ribosomal protein uL1 family.

It is found in the mitochondrion. This Mus musculus (Mouse) protein is Large ribosomal subunit protein uL1m (Mrpl1).